A 276-amino-acid polypeptide reads, in one-letter code: Small ribosomal subunit protein uS2 (276 aa).

Ser2 is modified (N-acetylserine).

Belongs to the universal ribosomal protein uS2 family. In terms of assembly, component of the small ribosomal subunit. Mature ribosomes consist of a small (40S) and a large (60S) subunit. The 40S subunit contains about 33 different proteins and 1 molecule of RNA (18S). The 60S subunit contains about 49 different proteins and 3 molecules of RNA (28S, 5.8S and 5S). Interacts with rps-21.

The protein resides in the cytoplasm. Its function is as follows. Required for the assembly and/or stability of the 40S ribosomal subunit. Required for the processing of the 20S rRNA-precursor to mature 18S rRNA in a late step of the maturation of 40S ribosomal subunits. Involved in cold-warm shock-induced translocation of the RNA exosome components from the nucleolus to nucleoplasm. In Caenorhabditis elegans, this protein is Small ribosomal subunit protein uS2.